A 243-amino-acid polypeptide reads, in one-letter code: Terpene cyclase dpmpB (243 aa).

The next 7 membrane-spanning stretches (helical) occupy residues 13 to 33, 51 to 71, 78 to 98, 112 to 132, 141 to 161, 169 to 189, and 207 to 227; these read FLEVAWLADACKLLMGVGWTA, ALMPLCCNFAWELVYALILPF, WVHVTGLAFNCGVMYTAIKFA, LTWIFIASVAGWMSAHLALAA, AWSAYGCQLLLSVGGLCQLLC, SYLLWFSRFFGSLVLIPQDIL, and LWFVSIFLILDGSYGILLWYV.

It belongs to the paxB family.

It localises to the membrane. Its pathway is secondary metabolite biosynthesis; terpenoid biosynthesis. Its function is as follows. Terpene cyclase; part of the gene cluster that mediates the biosynthesis of diterpenoid pyrones. The first step of the pathway is the synthesis of the alpha-pyrone moiety by the polyketide synthase dpmpA via condensation of one acetyl-CoA starter unit with 3 malonyl-CoA units and 2 methylations. The alpha-pyrone is then combined with geranylgeranyl pyrophosphate (GGPP) formed by the GGPP synthase dpmpD through the action of the prenyltransferase dpmpC to yield a linear alpha-pyrone diterpenoid. Subsequent steps in the diterpenoid pyrone biosynthetic pathway involve the decalin core formation, which is initiated by the epoxidation of the C10-C11 olefin by the FAD-dependent oxidoreductase dpmpE, and is followed by a cyclization cascade catalyzed by the terpene cyclase dpmpB. The short chain dehydrogenase/reductase dpmpG then oxidizes the 8S hydroxy group to a ketone and the short chain dehydrogenase/reductase dpmpH reduces the ketone to the 8R hydroxy group to yield higginsianin B. Higginsianin B is further methylated by the methyltransferase dpmpI to produce the intermediate named FDDP B. The cytochrome P450 monooxygenase dpmpJ then oxidizes the C-26 methyl to primary alcohol, producing the final diterpenoid pyrone with a C-26 primary alcohol on the gamma-pyrone moiety named FDDP C. The protein is Terpene cyclase dpmpB of Macrophomina phaseolina (strain MS6) (Charcoal rot fungus).